The sequence spans 349 residues: tRNA pseudouridine synthase D (349 aa).

Position 26 (Phe-26) interacts with substrate. Asp-79 (nucleophile) is an active-site residue. Asn-128 provides a ligand contact to substrate. Residues 154–302 (GVPNYFGEQR…VEGCRRAILV (149 aa)) enclose the TRUD domain. Residue Phe-328 participates in substrate binding.

The protein belongs to the pseudouridine synthase TruD family.

The catalysed reaction is uridine(13) in tRNA = pseudouridine(13) in tRNA. Its function is as follows. Responsible for synthesis of pseudouridine from uracil-13 in transfer RNAs. In Photorhabdus laumondii subsp. laumondii (strain DSM 15139 / CIP 105565 / TT01) (Photorhabdus luminescens subsp. laumondii), this protein is tRNA pseudouridine synthase D.